The sequence spans 464 residues: 3-isopropylmalate dehydratase large subunit (464 aa).

Positions 337, 397, and 400 each coordinate [4Fe-4S] cluster.

The protein belongs to the aconitase/IPM isomerase family. LeuC type 1 subfamily. In terms of assembly, heterodimer of LeuC and LeuD. [4Fe-4S] cluster serves as cofactor.

It carries out the reaction (2R,3S)-3-isopropylmalate = (2S)-2-isopropylmalate. Its pathway is amino-acid biosynthesis; L-leucine biosynthesis; L-leucine from 3-methyl-2-oxobutanoate: step 2/4. In terms of biological role, catalyzes the isomerization between 2-isopropylmalate and 3-isopropylmalate, via the formation of 2-isopropylmaleate. The chain is 3-isopropylmalate dehydratase large subunit from Bacillus cereus (strain ZK / E33L).